Consider the following 463-residue polypeptide: Probable diacyglycerol O-acyltransferase tgs1 (463 aa).

His137 functions as the Proton acceptor in the catalytic mechanism.

This sequence belongs to the long-chain O-acyltransferase family.

It catalyses the reaction an acyl-CoA + a 1,2-diacyl-sn-glycerol = a triacyl-sn-glycerol + CoA. It participates in glycerolipid metabolism; triacylglycerol biosynthesis. In terms of biological role, catalyzes the terminal and only committed step in triacylglycerol synthesis by using diacylglycerol and fatty acyl CoA as substrates. Required for storage lipid synthesis. The sequence is that of Probable diacyglycerol O-acyltransferase tgs1 (tgs1) from Mycobacterium tuberculosis (strain CDC 1551 / Oshkosh).